Reading from the N-terminus, the 278-residue chain is MSTYFIGDIHGCFNELMHLLEKVSFDANSDVLWLTGDLINRGPKSLEVLRFVSSLGDNVKMVLGNHDVNLIALYASIKNSKKSSLMNNLLKSHDIDYLIYWLRKQPLFRVDHKKKIIMSHAGMYPYWDIQTASCYAKKIESMLCNHNYDTFLDFLYNNSDIKSKLYECTVFKNRELECLKLALNVFTRMRYCLPNGELDMTCKQSPSKNISSLLPWFFIKNSCLEDYCVFFGHWASLEKNITPKNIISLDTGCCWGGILSMFRLEDKKWFVQESEIKK.

It belongs to the Ap4A hydrolase family.

The catalysed reaction is P(1),P(4)-bis(5'-adenosyl) tetraphosphate + H2O = 2 ADP + 2 H(+). Its function is as follows. Hydrolyzes diadenosine 5',5'''-P1,P4-tetraphosphate to yield ADP. The polypeptide is Bis(5'-nucleosyl)-tetraphosphatase, symmetrical (Buchnera aphidicola subsp. Baizongia pistaciae (strain Bp)).